We begin with the raw amino-acid sequence, 461 residues long: UDP-N-acetylmuramoylalanine--D-glutamate ligase (461 aa).

Residue 115 to 121 (GSNGKTT) coordinates ATP.

This sequence belongs to the MurCDEF family.

It localises to the cytoplasm. The catalysed reaction is UDP-N-acetyl-alpha-D-muramoyl-L-alanine + D-glutamate + ATP = UDP-N-acetyl-alpha-D-muramoyl-L-alanyl-D-glutamate + ADP + phosphate + H(+). It functions in the pathway cell wall biogenesis; peptidoglycan biosynthesis. Its function is as follows. Cell wall formation. Catalyzes the addition of glutamate to the nucleotide precursor UDP-N-acetylmuramoyl-L-alanine (UMA). The sequence is that of UDP-N-acetylmuramoylalanine--D-glutamate ligase from Acidobacterium capsulatum (strain ATCC 51196 / DSM 11244 / BCRC 80197 / JCM 7670 / NBRC 15755 / NCIMB 13165 / 161).